The sequence spans 506 residues: AAA-ATPase At4g25835 (506 aa).

The first 20 residues, 1 to 20 (MKEYWTSLASLLGVLAFCQS), serve as a signal peptide directing secretion. 244–251 (GPPGTGKS) is a binding site for ATP. A disordered region spans residues 462–506 (GKSRVQNVSLEEQENRAFDSLYAEENGGEEEEIEDNICKSSDDCS). The segment covering 487-496 (NGGEEEEIED) has biased composition (acidic residues). Residues 497 to 506 (NICKSSDDCS) show a composition bias toward basic and acidic residues.

The protein belongs to the AAA ATPase family. BCS1 subfamily. Mg(2+) is required as a cofactor.

The enzyme catalyses ATP + H2O = ADP + phosphate + H(+). The polypeptide is AAA-ATPase At4g25835 (Arabidopsis thaliana (Mouse-ear cress)).